The primary structure comprises 432 residues: Luc7-like protein 3 (432 aa).

At Met-1 the chain carries N-acetylmethionine. Residues Ser-3, Ser-110, and Ser-115 each carry the phosphoserine modification. The stretch at 124–181 forms a coiled coil; it reads KNEEKIQVLTDKIDVLLQQIEELGSEGKVEEAQGMMKLVEQLKEERELLRSTTSTIES. N6-acetyllysine is present on Lys-231. Basic and acidic residues predominate over residues 234–287; sequence LRKRTEEPDRDERLKKEKQEREEREKEREREREERERKRRREEEEREKERARDR. A disordered region spans residues 234–432; the sequence is LRKRTEEPDR…IKSEGDTQSN (199 aa). The segment covering 288 to 301 has biased composition (basic residues); that stretch reads ERRKRSRSRSRHSS. Positions 302-311 are enriched in basic and acidic residues; it reads RTSDRRCSRS. Residues 312 to 367 show a composition bias toward basic residues; that stretch reads RDHKRSRSRERRRSRSRDRRRSRSHDRSERKHRSRSRDRRRSKSRDRKSYKHRSKS. A compositionally biased stretch (basic and acidic residues) spans 368–414; sequence RDREQDRKSKEKEKRGSDDKKSSVKSSSREKQSEDTNTESKESDTKN. Residue Ser-420 is modified to Phosphoserine. The segment covering 421-432 has biased composition (basic and acidic residues); it reads EDIKSEGDTQSN. Residue Lys-424 forms a Glycyl lysine isopeptide (Lys-Gly) (interchain with G-Cter in SUMO1); alternate linkage. Residue Lys-424 forms a Glycyl lysine isopeptide (Lys-Gly) (interchain with G-Cter in SUMO2); alternate linkage. A phosphoserine mark is found at Ser-425 and Ser-431.

This sequence belongs to the Luc7 family. May interact with SFRS1 and form homodimers. Interacts with JMJD6. Interacts with RBM25. Interacts with RSRC1 (via Arg/Ser-rich domain). Interacts with RRP1B.

The protein resides in the nucleus speckle. Functionally, binds cAMP regulatory element DNA sequence. May play a role in RNA splicing. The protein is Luc7-like protein 3 (LUC7L3) of Bos taurus (Bovine).